A 154-amino-acid chain; its full sequence is Large ribosomal subunit protein eL24 (154 aa).

The interval 92-154 (AKRNQKPEVR…AAAPRVGGKR (63 aa)) is disordered. Residues 96-122 (QKPEVRKAQREQAVKAAKEKKKADQVG) show a composition bias toward basic and acidic residues. Over residues 129 to 154 (KARATAPKTKAPKTVKAAAPRVGGKR) the composition is skewed to low complexity.

This sequence belongs to the eukaryotic ribosomal protein eL24 family.

The protein is Large ribosomal subunit protein eL24 (RPL24) of Branchiostoma belcheri (Amphioxus).